Here is a 182-residue protein sequence, read N- to C-terminus: Adenine phosphoribosyltransferase (182 aa).

Belongs to the purine/pyrimidine phosphoribosyltransferase family. As to quaternary structure, homodimer.

It localises to the cytoplasm. The catalysed reaction is AMP + diphosphate = 5-phospho-alpha-D-ribose 1-diphosphate + adenine. It functions in the pathway purine metabolism; AMP biosynthesis via salvage pathway; AMP from adenine: step 1/1. Functionally, catalyzes a salvage reaction resulting in the formation of AMP, that is energically less costly than de novo synthesis. The protein is Adenine phosphoribosyltransferase of Campylobacter jejuni subsp. jejuni serotype O:2 (strain ATCC 700819 / NCTC 11168).